Consider the following 118-residue polypeptide: Small ribosomal subunit protein uS13 (118 aa).

The segment at 94-118 (SLPVRGQRTKTNARTRKGPRRPIKR) is disordered.

The protein belongs to the universal ribosomal protein uS13 family. Part of the 30S ribosomal subunit. Forms a loose heterodimer with protein S19. Forms two bridges to the 50S subunit in the 70S ribosome.

In terms of biological role, located at the top of the head of the 30S subunit, it contacts several helices of the 16S rRNA. In the 70S ribosome it contacts the 23S rRNA (bridge B1a) and protein L5 of the 50S subunit (bridge B1b), connecting the 2 subunits; these bridges are implicated in subunit movement. Contacts the tRNAs in the A and P-sites. The sequence is that of Small ribosomal subunit protein uS13 from Dichelobacter nodosus (strain VCS1703A).